The sequence spans 204 residues: Tat proofreading chaperone DmsD (204 aa).

It belongs to the TorD/DmsD family. DmsD subfamily.

Functionally, required for biogenesis/assembly of DMSO reductase, but not for the interaction of the DmsA signal peptide with the Tat system. May be part of a chaperone cascade complex that facilitates a folding-maturation pathway for the substrate protein. The protein is Tat proofreading chaperone DmsD of Salmonella typhi.